The chain runs to 502 residues: TNF receptor-associated factor family protein DDB_G0268444 (502 aa).

The RING-type; degenerate zinc-finger motif lies at 28–68 (CSICYESVYKKEIYQCKEIHWFCKTCWAESLFKKKECMICR). 2 consecutive TRAF-type zinc fingers follow at residues 129 to 183 (KHLK…SRSL) and 185 to 243 (NHYK…PKSN). Residues 261–295 (IESQSLQIKETNIKYENLLNKINKLEQLETESKCD) are a coiled coil. One can recognise an MATH domain in the interval 368 to 489 (KYKNRWSISN…DDSLVIDFSI (122 aa)).

The protein belongs to the TNF receptor-associated factor family. A subfamily.

Its subcellular location is the cytoplasm. In terms of biological role, probable adapter protein and signal transducer that links members of the tumor necrosis factor receptor family to different signaling pathways by association with the receptor cytoplasmic domain and kinases. The chain is TNF receptor-associated factor family protein DDB_G0268444 from Dictyostelium discoideum (Social amoeba).